A 288-amino-acid polypeptide reads, in one-letter code: Polyamine aminopropyltransferase (288 aa).

One can recognise a PABS domain in the interval 11–245 (IEWYPRGYGV…SPWSFLVGVK (235 aa)). Gln-36 lines the S-methyl-5'-thioadenosine pocket. Spermidine contacts are provided by His-67 and Asp-91. S-methyl-5'-thioadenosine contacts are provided by residues Glu-111 and 148–149 (DG). Catalysis depends on Asp-166, which acts as the Proton acceptor. 166 to 169 (DSTD) is a binding site for spermidine. Pro-173 contributes to the S-methyl-5'-thioadenosine binding site.

It belongs to the spermidine/spermine synthase family. Homodimer or homotetramer.

It is found in the cytoplasm. It catalyses the reaction S-adenosyl 3-(methylsulfanyl)propylamine + agmatine = N(1)-(3-aminopropyl)agmatine + S-methyl-5'-thioadenosine + H(+). It carries out the reaction S-adenosyl 3-(methylsulfanyl)propylamine + putrescine = S-methyl-5'-thioadenosine + spermidine + H(+). The catalysed reaction is cadaverine + S-adenosyl 3-(methylsulfanyl)propylamine = aminopropylcadaverine + S-methyl-5'-thioadenosine + H(+). It functions in the pathway amine and polyamine biosynthesis; spermidine biosynthesis; spermidine from putrescine: step 1/1. Functionally, involved in the biosynthesis of polyamines which are thought to support the growth of thermophilic microorganisms under high-temperature conditions. It seems that long-chain and branched-chain of polyamines effectively stabilize DNA and RNA, respectively. Catalyzes the irreversible transfer of a propylamine group from the amino donor S-adenosylmethioninamine (decarboxy-AdoMet) to agmatine to yield N1-aminopropylagmatine. It can also use cadaverine (1,5-diaminopentane) and putrescine (1,4-diaminobutane) as substrate with a lower activity than that of agmatine. The reaction involves a nucleophilic attack on the C-3 methylene of the propylamine moiety adjacent to the positively charged sulfur of decarboxy-AdoMet. The polypeptide is Polyamine aminopropyltransferase (Thermococcus kodakarensis (strain ATCC BAA-918 / JCM 12380 / KOD1) (Pyrococcus kodakaraensis (strain KOD1))).